Reading from the N-terminus, the 1125-residue chain is tRNA (34-2'-O)-methyltransferase regulator WDR6 (1125 aa).

Met1 carries the N-acetylmethionine modification. 19 WD repeats span residues 53–97, 105–143, 147–189, 200–238, 247–285, 289–327, 335–376, 381–422, 425–470, 476–520, 559–598, 604–642, 645–684, 739–785, 848–897, 905–950, 974–1016, 1040–1077, and 1083–1125; these read VKRV…VVKV, RELW…LYDP, CMLQ…IWYP, APDR…LWKV, RVQN…VWSH, ILQA…LWHL, LGVS…LYDL, WEQL…VVPI, PTAA…ISAA, IFVK…LFPV, PVST…FVHG, VLRQ…VWSP, HEKL…LYRA, LIDI…VWAV, RNKH…LFLL, HLLA…FWDL, GTPS…VFTL, EEYS…FWRL, and TFMN…NWYD.

This sequence belongs to the WD repeat WDR6 family. In terms of assembly, interacts with FTSJ1; the interaction is direct, and required for 2'-O-methylation of position 34 in substrate tRNAs. Interacts with IRS4. Interacts with STK11/LKB1.

The protein localises to the cytoplasm. Functionally, together with methyltransferase FTSJ1, methylates the 2'-O-ribose of nucleotides at position 34 of the tRNA anticodon loop of substrate tRNAs. Required for the correct positioning of the substrate tRNA for methylation. Required to suppress amino acid starvation-induced autophagy. Enhances the STK11/LKB1-induced cell growth suppression activity. The sequence is that of tRNA (34-2'-O)-methyltransferase regulator WDR6 (Wdr6) from Mus musculus (Mouse).